Reading from the N-terminus, the 662-residue chain is Chromosomal replication initiator protein DnaA (662 aa).

The domain I, interacts with DnaA modulators stretch occupies residues 1 to 93; that stretch reads MDDEQNVLAT…QVEGLGVRIA (93 aa). The domain II stretch occupies residues 93-322; sequence AAPATPTAER…STPAPANSSA (230 aa). The segment covering 96–105 has biased composition (low complexity); it reads ATPTAERAAA. Residues 96-294 form a disordered region; the sequence is ATPTAERAAA…SDGPVERDDE (199 aa). A compositionally biased stretch (basic and acidic residues) spans 114-123; that stretch reads SRPERPRGER. Over residues 166 to 199 the composition is skewed to low complexity; it reads PPAAEYTPAAEYTPAAEYTPAAEYSPEPEYTPAT. Basic and acidic residues-rich tracts occupy residues 236 to 248 and 261 to 290; these read TPRR…RRDA and PGDR…GPVE. The interval 323–539 is domain III, AAA+ region; sequence SLNAKYTFET…GALIRVTAFA (217 aa). ATP contacts are provided by glycine 367, glycine 369, lysine 370, and threonine 371. Residues 540–662 form a domain IV, binds dsDNA region; it reads SLNGQPLDLS…LTARIKQRSR (123 aa).

The protein belongs to the DnaA family. In terms of assembly, oligomerizes as a right-handed, spiral filament on DNA at oriC.

It is found in the cytoplasm. Plays an essential role in the initiation and regulation of chromosomal replication. ATP-DnaA binds to the origin of replication (oriC) to initiate formation of the DNA replication initiation complex once per cell cycle. Binds the DnaA box (a 9 base pair repeat at the origin) and separates the double-stranded (ds)DNA. Forms a right-handed helical filament on oriC DNA; dsDNA binds to the exterior of the filament while single-stranded (ss)DNA is stabiized in the filament's interior. The ATP-DnaA-oriC complex binds and stabilizes one strand of the AT-rich DNA unwinding element (DUE), permitting loading of DNA polymerase. After initiation quickly degrades to an ADP-DnaA complex that is not apt for DNA replication. Binds acidic phospholipids. The sequence is that of Chromosomal replication initiator protein DnaA from Nocardia farcinica (strain IFM 10152).